We begin with the raw amino-acid sequence, 45 residues long: uncharacterized protein (45 aa).

Residues 5-25 (IFFIFALSGILAACTVGGGVS) form a helical membrane-spanning segment.

The protein resides in the membrane. This is an uncharacterized protein from Haemophilus influenzae (strain ATCC 51907 / DSM 11121 / KW20 / Rd).